Reading from the N-terminus, the 256-residue chain is Bialaphos biosynthetic pathway regulatory protein (256 aa).

In terms of domain architecture, HTH luxR-type spans 184-249; it reads ETADAIDVSD…QLGARAAECR (66 aa). The segment at residues 208–227 is a DNA-binding region (H-T-H motif); it reads DVAMARSLGISTRTLRRVIT.

Involved in the regulation of the biosynthesis of phosphinothricin tripeptide (PTT), also known as bialaphos (BA), a natural-product antibiotic and potent herbicide. This is Bialaphos biosynthetic pathway regulatory protein (brpA) from Streptomyces hygroscopicus.